The following is a 452-amino-acid chain: GTPase Der (452 aa).

EngA-type G domains are found at residues 4–169 and 177–352; these read PVVA…PPQD and IQMA…EQHR. Residues 10 to 17, 57 to 61, 120 to 123, 183 to 190, 230 to 234, and 295 to 298 each bind GTP; these read GRPNVGKS, DTGGL, NKCE, DTAGI, and NKWD. Residues 353 to 438 form the KH-like domain; it reads RRVTTAVVNE…PVRLFWRGKQ (86 aa).

It belongs to the TRAFAC class TrmE-Era-EngA-EngB-Septin-like GTPase superfamily. EngA (Der) GTPase family. Associates with the 50S ribosomal subunit.

In terms of biological role, GTPase that plays an essential role in the late steps of ribosome biogenesis. The polypeptide is GTPase Der (Synechococcus sp. (strain RCC307)).